The chain runs to 289 residues: ATP synthase gamma chain (289 aa).

Belongs to the ATPase gamma chain family. As to quaternary structure, F-type ATPases have 2 components, CF(1) - the catalytic core - and CF(0) - the membrane proton channel. CF(1) has five subunits: alpha(3), beta(3), gamma(1), delta(1), epsilon(1). CF(0) has three main subunits: a, b and c.

The protein resides in the cell inner membrane. Its function is as follows. Produces ATP from ADP in the presence of a proton gradient across the membrane. The gamma chain is believed to be important in regulating ATPase activity and the flow of protons through the CF(0) complex. The chain is ATP synthase gamma chain from Histophilus somni (strain 2336) (Haemophilus somnus).